The chain runs to 855 residues: Suppressor of tumorigenicity 14 protein homolog (855 aa).

The interval 1–21 (MKSERARRGAGGSGDLGAGFK) is disordered. At 1-55 (MKSERARRGAGGSGDLGAGFKYTSRPENMNGCEEGVEFLPANNSSKVEKGGPRRW) the chain is on the cytoplasmic side. Ser-13 carries the post-translational modification Phosphoserine. Residues 56-76 (VVLMAVLAAFLALSLLAGLLA) form a helical; Signal-anchor for type II membrane protein membrane-spanning segment. Topologically, residues 77-855 (WHFQDRNVRV…RDWIKAQIGV (779 aa)) are extracellular. The 118-residue stretch at 86 to 203 (VQKIFNGYLS…TSVVAFPSDP (118 aa)) folds into the SEA domain. N-linked (GlcNAc...) asparagine glycosylation occurs at Asn-109. A disulfide bond links Cys-214 and Cys-244. CUB domains follow at residues 214 to 334 (CSFA…FFQL) and 340 to 447 (CGGY…FLSF). Asn-302 and Asn-365 each carry an N-linked (GlcNAc...) asparagine glycan. 15 disulfides stabilise this stretch: Cys-340–Cys-366, Cys-397–Cys-410, Cys-453–Cys-464, Cys-459–Cys-477, Cys-471–Cys-486, Cys-488–Cys-501, Cys-496–Cys-514, Cys-508–Cys-523, Cys-525–Cys-537, Cys-532–Cys-550, Cys-544–Cys-559, Cys-567–Cys-579, Cys-574–Cys-593, Cys-587–Cys-602, and Cys-641–Cys-657. LDL-receptor class A domains follow at residues 452-487 (PCPGSFMCNTGRCIRKELRCDGWADCTDYSDELDCK), 487-524 (KCNATYQFTCRDKFCKPLFWVCDSVKDCEDGSDEEGCS), 524-560 (SCPPNTFKCGNGKCLPQSQQCDRKDDCGDGSDEAKCQ), and 566-603 (PCTEHTHRCLNGLCVDKSNPQCDGNEDCTDGSDEKDCD). The N-linked (GlcNAc...) asparagine glycan is linked to Asn-489. Residues 615–854 (VVGGENSDQG…FRDWIKAQIG (240 aa)) enclose the Peptidase S1 domain. Active-site charge relay system residues include His-656 and Asp-711. Asn-772 carries N-linked (GlcNAc...) asparagine glycosylation. Intrachain disulfides connect Cys-776/Cys-790 and Cys-801/Cys-830. Ser-805 serves as the catalytic Charge relay system.

This sequence belongs to the peptidase S1 family. Interacts with CDCP1. May interact with TMEFF1.

Its subcellular location is the membrane. It catalyses the reaction Cleaves various synthetic substrates with Arg or Lys at the P1 position and prefers small side-chain amino acids, such as Ala and Gly, at the P2 position.. Its function is as follows. Exhibits trypsin-like activity as defined by cleavage of synthetic substrates with Arg or Lys as the P1 site. Involved in the terminal differentiation of keratinocytes through prostasin (PRSS8) activation and filaggrin (FLG) processing. Proteolytically cleaves and therefore activates TMPRSS13. The sequence is that of Suppressor of tumorigenicity 14 protein homolog (ST14) from Bos taurus (Bovine).